Reading from the N-terminus, the 526-residue chain is Rho guanine nucleotide exchange factor 3 (526 aa).

Residues 20–40 (ELPPASGPAKDAEEPSNKRVK) form a disordered region. 2 positions are modified to phosphoserine: Ser-47 and Ser-70. The 183-residue stretch at 122-304 (KRQEAIFELS…QGIVAEINTK (183 aa)) folds into the DH domain. The PH domain maps to 291–449 (INIIQGIVAE…WLNCIRQAKE (159 aa)). 2 disordered regions span residues 464-502 (EGSF…TSEV) and 507-526 (EHME…ESNV). Positions 466–475 (SFLNPTTGSR) are enriched in polar residues.

Interacts with RHOA and RHOB.

The protein localises to the cytoplasm. Acts as a guanine nucleotide exchange factor (GEF) for RhoA and RhoB GTPases. The polypeptide is Rho guanine nucleotide exchange factor 3 (ARHGEF3) (Macaca fascicularis (Crab-eating macaque)).